Here is a 157-residue protein sequence, read N- to C-terminus: Putative 4-hydroxy-4-methyl-2-oxoglutarate aldolase (157 aa).

Substrate is bound by residues 78–81 and R100; that span reads GDVI. Residue D101 participates in a divalent metal cation binding.

The protein belongs to the class II aldolase/RraA-like family. As to quaternary structure, homotrimer. A divalent metal cation is required as a cofactor.

The enzyme catalyses 4-hydroxy-4-methyl-2-oxoglutarate = 2 pyruvate. It catalyses the reaction oxaloacetate + H(+) = pyruvate + CO2. Functionally, catalyzes the aldol cleavage of 4-hydroxy-4-methyl-2-oxoglutarate (HMG) into 2 molecules of pyruvate. Also contains a secondary oxaloacetate (OAA) decarboxylase activity due to the common pyruvate enolate transition state formed following C-C bond cleavage in the retro-aldol and decarboxylation reactions. This is Putative 4-hydroxy-4-methyl-2-oxoglutarate aldolase from Mycobacterium leprae (strain Br4923).